The primary structure comprises 559 residues: Tryprostatin B 6-hydroxylase (559 aa).

3 consecutive transmembrane segments (helical) span residues 13–35 (PSVMKCGYLATAGLIGICTHLSY), 48–65 (YVRFHLCLTMGVAALLYA), and 82–104 (VSLLMATYLVGLFASLLLYRTLF). A heme-binding site is contributed by Cys502.

Belongs to the cytochrome P450 family. Heme serves as cofactor.

Its subcellular location is the membrane. The catalysed reaction is tryprostatin B + reduced [NADPH--hemoprotein reductase] + O2 = 6-hydroxytryprostatin B + oxidized [NADPH--hemoprotein reductase] + H2O + H(+). The protein operates within mycotoxin biosynthesis. Cytochrome P450 monooxygenase; part of the gene cluster that mediates the biosynthesis of fumitremorgins, indole alkaloids that carry not only intriguing chemical structures, but also interesting biological and pharmacological activities. The biosynthesis of fumitremorgin-type alkaloids begins by condensation of the two amino acids L-tryptophan and L-proline to brevianamide F, catalyzed by the non-ribosomal peptide synthetase ftmA. Brevianamide F is then prenylated by the prenyltransferase ftmPT1/ftmB in the presence of dimethylallyl diphosphate, resulting in the formation of tryprostatin B. The three cytochrome P450 monooxygenases, ftmP450-1/ftmC, ftmP450-2/ftmE and ftmP450-3/FtmG, are responsible for the conversion of tryprostatin B to 6-hydroxytryprostatin B, tryprostatin A to fumitremorgin C and fumitremorgin C to 12,13-dihydroxyfumitremorgin C, respectively. The putative methyltransferase ftmMT/ftmD is expected for the conversion of 6-hydroxytryprostatin B to tryprostatin A. FtmPT2/FtmH catalyzes the prenylation of 12,13-dihydroxyfumitre-morgin C in the presence of dimethylallyl diphosphate, resulting in the formation of fumitremorgin B. Fumitremorgin B is further converted to verruculogen by ftmOx1/ftmF via the insertion of an endoperoxide bond between the two prenyl moieties. In some fungal species, verruculogen is further converted to fumitremorgin A, but the enzymes involved in this step have not been identified yet. In Aspergillus fumigatus (Neosartorya fumigata), this protein is Tryprostatin B 6-hydroxylase.